Consider the following 364-residue polypeptide: DNA replication and repair protein RecF (364 aa).

30–37 (GNNGMGKT) contacts ATP.

The protein belongs to the RecF family.

The protein resides in the cytoplasm. Its function is as follows. The RecF protein is involved in DNA metabolism; it is required for DNA replication and normal SOS inducibility. RecF binds preferentially to single-stranded, linear DNA. It also seems to bind ATP. The sequence is that of DNA replication and repair protein RecF from Porphyromonas gingivalis (strain ATCC BAA-308 / W83).